The sequence spans 25 residues: Hypotensin-2 (25 aa).

The interval 1-25 (AEIDFSGIPEDIIKEIKETNAKPPA) is disordered. Position 6 is a phosphoserine (Ser-6). Residues 11-25 (DIIKEIKETNAKPPA) are compositionally biased toward basic and acidic residues.

Belongs to the non-disulfide-bridged peptide (NDBP) superfamily. Expressed by the venom gland.

It localises to the secreted. Its function is as follows. Agonist of the B2 bradykinin receptor (BDKRB2). Potentiates the hypotensive effect of bradykinin (BK) and induces a direct vasorelaxing effect, independently of BK, by endothelium- and nitric oxide (NO)-dependent mechanisms in rat aortic ring preparations. Does not inhibit the angiotensin-converting enzyme (ACE). Also exerts proangiogenic, antiinflammatory, and antifibrogenic activities. Does not inhibit the angiotensin-converting enzyme (ACE) but weakly increases its activity, and weakly inhibits neprilysin (NEP) in a non-competitive manner. Exerts intermediate cytotoxicity and pro-inflammatory effects on mouse macrophages, and increases the phagocytic activity of these murine cells. Presents weak hemolytic activity at physiological concentrations (micromolar range), and weak lactate dehydrogenase (LDH) release from mast cells. Does not induce mast cell degranulation, and antimicrobial effects. In vivo, causes intense pain (but no edema formation), when injected in mice hind paws. Also induces discomfort and anxiety in mice, as it moderately diminishes locomotion and moderately increases rearing behavior. This is Hypotensin-2 from Tityus serrulatus (Brazilian scorpion).